A 527-amino-acid chain; its full sequence is 4-alpha-glucanotransferase (527 aa).

It belongs to the disproportionating enzyme family.

It localises to the cytoplasm. It carries out the reaction Transfers a segment of a (1-&gt;4)-alpha-D-glucan to a new position in an acceptor, which may be glucose or a (1-&gt;4)-alpha-D-glucan.. The protein is 4-alpha-glucanotransferase (malQ) of Chlamydia muridarum (strain MoPn / Nigg).